We begin with the raw amino-acid sequence, 123 residues long: Small ribosomal subunit protein uS12 (123 aa).

Position 89 is a 3-methylthioaspartic acid (Asp89). Residues 101 to 123 (SLDTSGVKDRKQGRSKYGAKRPK) form a disordered region. Basic residues predominate over residues 113 to 123 (GRSKYGAKRPK).

The protein belongs to the universal ribosomal protein uS12 family. Part of the 30S ribosomal subunit. Contacts proteins S8 and S17. May interact with IF1 in the 30S initiation complex.

Its function is as follows. With S4 and S5 plays an important role in translational accuracy. Functionally, interacts with and stabilizes bases of the 16S rRNA that are involved in tRNA selection in the A site and with the mRNA backbone. Located at the interface of the 30S and 50S subunits, it traverses the body of the 30S subunit contacting proteins on the other side and probably holding the rRNA structure together. The combined cluster of proteins S8, S12 and S17 appears to hold together the shoulder and platform of the 30S subunit. This chain is Small ribosomal subunit protein uS12, found in Azotobacter vinelandii (strain DJ / ATCC BAA-1303).